Here is a 271-residue protein sequence, read N- to C-terminus: Phospholipid scramblase family member 5 (271 aa).

Residues 1-10 are compositionally biased toward polar residues; that stretch reads MASKDAQNQR. The interval 1-33 is disordered; sequence MASKDAQNQRRGLPGFLPGAPDPDQSLPASSNP. The segment at 1 to 45 is proline-rich domain (PRD); the sequence is MASKDAQNQRRGLPGFLPGAPDPDQSLPASSNPGNQAWQLSLPLP.

This sequence belongs to the phospholipid scramblase family.

This chain is Phospholipid scramblase family member 5 (PLSCR5), found in Homo sapiens (Human).